The primary structure comprises 78 residues: uncharacterized protein (78 aa).

This is an uncharacterized protein from Treponema pallidum (strain Nichols).